We begin with the raw amino-acid sequence, 479 residues long: Beta-amyrin 28-monooxygenase (479 aa).

The chain crosses the membrane as a helical span at residues 5–25 (FYLSLLLLFVTFISLSLFFIF). Position 426 (Cys426) interacts with heme.

The protein belongs to the cytochrome P450 family. Requires heme as cofactor. In terms of tissue distribution, expressed in roots, nodules and flowers.

It is found in the membrane. It carries out the reaction beta-amyrin + 3 reduced [NADPH--hemoprotein reductase] + 3 O2 = oleanolate + 3 oxidized [NADPH--hemoprotein reductase] + 4 H2O + 4 H(+). Its function is as follows. Catalyzes the carboxylation of beta-amyrin at the C-28 position to form oleanolic acid. Involved in an early step in the hemolytic saponin biosynthetic pathway. Catalyzes the carboxylation of alpha-amyrin and lupeol at the C-28 position to form ursolic acid and betulinic acid respectively. The chain is Beta-amyrin 28-monooxygenase from Medicago truncatula (Barrel medic).